Consider the following 128-residue polypeptide: RYamide neuropeptides (128 aa).

The N-terminal stretch at 1–23 is a signal peptide; the sequence is MHARKLIVVLVYILTVLVSVAVS. Residues 26–29 constitute a propeptide that is removed on maturation; sequence YTSE. Tyr-44 bears the Tyrosine amide mark. Residues 47–63 constitute a propeptide that is removed on maturation; sequence GGPSPNNKENKVNIRPR. The residue at position 73 (Tyr-73) is a Tyrosine amide. Positions 77 to 128 are excised as a propeptide; the sequence is SGWSPNASLVYPVSTPLCGLDEDLSCAYTGISDLYRCTPRKGESEEFTTSSN.

It localises to the secreted. In terms of biological role, neuropeptides RYamide-1 and RYamide-2 are ligands for the G-protein coupled receptor RYa-R. RYamide-2 is the most potent activator of RYa-R. This is RYamide neuropeptides from Tribolium castaneum (Red flour beetle).